A 264-amino-acid chain; its full sequence is Thymidylate synthase (264 aa).

Arg21 provides a ligand contact to dUMP. Position 51 (His51) interacts with (6R)-5,10-methylene-5,6,7,8-tetrahydrofolate. 126–127 (RR) contributes to the dUMP binding site. Residue Cys146 is the Nucleophile of the active site. DUMP contacts are provided by residues 166–169 (RSCD), Asn177, and 207–209 (HLY). Asp169 is a (6R)-5,10-methylene-5,6,7,8-tetrahydrofolate binding site. Ala263 serves as a coordination point for (6R)-5,10-methylene-5,6,7,8-tetrahydrofolate.

The protein belongs to the thymidylate synthase family. Bacterial-type ThyA subfamily. Homodimer.

The protein resides in the cytoplasm. The catalysed reaction is dUMP + (6R)-5,10-methylene-5,6,7,8-tetrahydrofolate = 7,8-dihydrofolate + dTMP. It functions in the pathway pyrimidine metabolism; dTTP biosynthesis. Catalyzes the reductive methylation of 2'-deoxyuridine-5'-monophosphate (dUMP) to 2'-deoxythymidine-5'-monophosphate (dTMP) while utilizing 5,10-methylenetetrahydrofolate (mTHF) as the methyl donor and reductant in the reaction, yielding dihydrofolate (DHF) as a by-product. This enzymatic reaction provides an intracellular de novo source of dTMP, an essential precursor for DNA biosynthesis. This chain is Thymidylate synthase, found in Shigella flexneri serotype 5b (strain 8401).